We begin with the raw amino-acid sequence, 327 residues long: MKKWQFVGTTALGATLLLGACGGGNGGSGNSDLKGEAKGDGSSTVAPIVEKLNEKWAQDHSDAKISAGQAGTGAGFQKFIAGDIDFADASRPIKDEEKQKLQDKNIKYKEFKIAQDGVTVAVNKENDFVDELDKQQLKAIYSGKAKTWKDVNSKWPDKKINAVSPNSSHGTYDFFENEVMNKEDIKAEKNADTNAIVSSVTKNKEGIGYFGYNFYVQNKDKLKEVKIKDENGKATEPTKKTIQDNSYALSRPLFIYVNEKALKDNKVMSEFIKFVLEDKGKAAEEAGYVAAPEKTYKSQLDDLKAFIDKNQKSDDKKSDDKKSEDKK.

An N-terminal signal peptide occupies residues 1–20; sequence MKKWQFVGTTALGATLLLGA. Cysteine 21 is lipidated: N-palmitoyl cysteine. Cysteine 21 is lipidated: S-diacylglycerol cysteine. The tract at residues 307 to 327 is disordered; the sequence is IDKNQKSDDKKSDDKKSEDKK.

It belongs to the PstS family. In terms of assembly, the complex is composed of two ATP-binding proteins (PstB), two transmembrane proteins (PstC and PstA) and a solute-binding protein (PstS).

It localises to the cell membrane. In terms of biological role, part of the ABC transporter complex PstSACB involved in phosphate import. The polypeptide is Phosphate-binding protein PstS (pstS) (Staphylococcus aureus (strain USA300)).